The chain runs to 29 residues: Cyclotide mobo-B (29 aa).

The cyclopeptide (Gly-Asn) cross-link spans 1 to 29; sequence GKPICGETCAKGKCYTPKCTCNWPICYKN. 3 disulfides stabilise this stretch: Cys5/Cys19, Cys9/Cys21, and Cys14/Cys26.

It belongs to the cyclotide family. In terms of processing, this is a cyclic peptide.

Its function is as follows. Probably participates in a plant defense mechanism. In Melicytus obovatus (Hymenanthera obovata), this protein is Cyclotide mobo-B.